We begin with the raw amino-acid sequence, 368 residues long: Peptide chain release factor 2 (368 aa).

An N5-methylglutamine modification is found at Q248.

Belongs to the prokaryotic/mitochondrial release factor family. Methylated by PrmC. Methylation increases the termination efficiency of RF2.

The protein localises to the cytoplasm. Its function is as follows. Peptide chain release factor 2 directs the termination of translation in response to the peptide chain termination codons UGA and UAA. This chain is Peptide chain release factor 2, found in Corynebacterium glutamicum (strain R).